Reading from the N-terminus, the 175-residue chain is uncharacterized protein (175 aa).

Belongs to the asfivirus B175L family.

This is an uncharacterized protein from Ornithodoros (relapsing fever ticks).